A 193-amino-acid chain; its full sequence is Peptidyl-tRNA hydrolase (193 aa).

Tyr-15 provides a ligand contact to tRNA. His-20 serves as the catalytic Proton acceptor. Phe-65, Asn-67, and Asn-113 together coordinate tRNA.

It belongs to the PTH family. Monomer.

The protein localises to the cytoplasm. It carries out the reaction an N-acyl-L-alpha-aminoacyl-tRNA + H2O = an N-acyl-L-amino acid + a tRNA + H(+). In terms of biological role, hydrolyzes ribosome-free peptidyl-tRNAs (with 1 or more amino acids incorporated), which drop off the ribosome during protein synthesis, or as a result of ribosome stalling. Catalyzes the release of premature peptidyl moieties from peptidyl-tRNA molecules trapped in stalled 50S ribosomal subunits, and thus maintains levels of free tRNAs and 50S ribosomes. The sequence is that of Peptidyl-tRNA hydrolase from Ehrlichia ruminantium (strain Gardel).